Reading from the N-terminus, the 537-residue chain is Light-independent protochlorophyllide reductase subunit B (537 aa).

A [4Fe-4S] cluster-binding site is contributed by Asp-36. Catalysis depends on Asp-292, which acts as the Proton donor. 428 to 429 is a binding site for substrate; sequence GL. The interval 459–483 is disordered; the sequence is TAGETAGQATEAATAPATPGAPLTG.

The protein belongs to the ChlB/BchB/BchZ family. As to quaternary structure, protochlorophyllide reductase is composed of three subunits; BchL, BchN and BchB. Forms a heterotetramer of two BchB and two BchN subunits. The cofactor is [4Fe-4S] cluster.

The enzyme catalyses chlorophyllide a + oxidized 2[4Fe-4S]-[ferredoxin] + 2 ADP + 2 phosphate = protochlorophyllide a + reduced 2[4Fe-4S]-[ferredoxin] + 2 ATP + 2 H2O. Its pathway is porphyrin-containing compound metabolism; bacteriochlorophyll biosynthesis (light-independent). Its function is as follows. Component of the dark-operative protochlorophyllide reductase (DPOR) that uses Mg-ATP and reduced ferredoxin to reduce ring D of protochlorophyllide (Pchlide) to form chlorophyllide a (Chlide). This reaction is light-independent. The NB-protein (BchN-BchB) is the catalytic component of the complex. The sequence is that of Light-independent protochlorophyllide reductase subunit B from Chloroherpeton thalassium (strain ATCC 35110 / GB-78).